Here is a 244-residue protein sequence, read N- to C-terminus: Type III pantothenate kinase (244 aa).

6 to 13 (DVGNTRIK) contributes to the ATP binding site. Substrate contacts are provided by residues Y87 and 94 to 97 (GIDR). The Proton acceptor role is filled by D96. D117 contacts K(+). T120 lines the ATP pocket. T172 contributes to the substrate binding site.

This sequence belongs to the type III pantothenate kinase family. Homodimer. NH4(+) is required as a cofactor. Requires K(+) as cofactor.

It is found in the cytoplasm. It carries out the reaction (R)-pantothenate + ATP = (R)-4'-phosphopantothenate + ADP + H(+). It participates in cofactor biosynthesis; coenzyme A biosynthesis; CoA from (R)-pantothenate: step 1/5. Catalyzes the phosphorylation of pantothenate (Pan), the first step in CoA biosynthesis. The chain is Type III pantothenate kinase from Flavobacterium johnsoniae (strain ATCC 17061 / DSM 2064 / JCM 8514 / BCRC 14874 / CCUG 350202 / NBRC 14942 / NCIMB 11054 / UW101) (Cytophaga johnsonae).